A 233-amino-acid polypeptide reads, in one-letter code: Phosphoribosylformylglycinamidine synthase subunit PurQ (233 aa).

The Glutamine amidotransferase type-1 domain maps to 3–233; the sequence is SAVLVFPGIN…GLVEHLKTAA (231 aa). Catalysis depends on C87, which acts as the Nucleophile. Catalysis depends on residues H204 and E206.

As to quaternary structure, part of the FGAM synthase complex composed of 1 PurL, 1 PurQ and 2 PurS subunits.

The protein resides in the cytoplasm. The catalysed reaction is N(2)-formyl-N(1)-(5-phospho-beta-D-ribosyl)glycinamide + L-glutamine + ATP + H2O = 2-formamido-N(1)-(5-O-phospho-beta-D-ribosyl)acetamidine + L-glutamate + ADP + phosphate + H(+). It carries out the reaction L-glutamine + H2O = L-glutamate + NH4(+). It participates in purine metabolism; IMP biosynthesis via de novo pathway; 5-amino-1-(5-phospho-D-ribosyl)imidazole from N(2)-formyl-N(1)-(5-phospho-D-ribosyl)glycinamide: step 1/2. In terms of biological role, part of the phosphoribosylformylglycinamidine synthase complex involved in the purines biosynthetic pathway. Catalyzes the ATP-dependent conversion of formylglycinamide ribonucleotide (FGAR) and glutamine to yield formylglycinamidine ribonucleotide (FGAM) and glutamate. The FGAM synthase complex is composed of three subunits. PurQ produces an ammonia molecule by converting glutamine to glutamate. PurL transfers the ammonia molecule to FGAR to form FGAM in an ATP-dependent manner. PurS interacts with PurQ and PurL and is thought to assist in the transfer of the ammonia molecule from PurQ to PurL. The sequence is that of Phosphoribosylformylglycinamidine synthase subunit PurQ from Rhodopseudomonas palustris (strain HaA2).